The primary structure comprises 131 residues: Keratin, high-sulfur matrix protein, IIIA3 (131 aa).

Wool.

The keratin products of mammalian epidermal derivatives such as wool and hair consist of microfibrils embedded in a rigid matrix of other proteins. The matrix proteins include the high-sulfur and high-tyrosine keratins, having molecular weights of 6-20 kDa, whereas the microfibrils contain the larger, low-sulfur keratins (40-56 kDa). This chain is Keratin, high-sulfur matrix protein, IIIA3, found in Ovis aries (Sheep).